A 250-amino-acid polypeptide reads, in one-letter code: 5'-nucleotidase SurE (250 aa).

A divalent metal cation is bound by residues aspartate 8, aspartate 9, serine 39, and asparagine 95.

The protein belongs to the SurE nucleotidase family. The cofactor is a divalent metal cation.

It is found in the cytoplasm. The catalysed reaction is a ribonucleoside 5'-phosphate + H2O = a ribonucleoside + phosphate. Nucleotidase that shows phosphatase activity on nucleoside 5'-monophosphates. This is 5'-nucleotidase SurE from Cupriavidus necator (strain ATCC 17699 / DSM 428 / KCTC 22496 / NCIMB 10442 / H16 / Stanier 337) (Ralstonia eutropha).